The following is a 215-amino-acid chain: Adenylate kinase (215 aa).

An ATP-binding site is contributed by 10–15 (GAGKGT). The segment at 30 to 59 (STGDMLRAAIKAGTPLGLEAKKIIDEGGLV) is NMP. AMP-binding positions include Thr-31, Arg-36, 57 to 59 (GLV), 85 to 88 (GFPR), and Gln-92. The segment at 122-159 (GRRVHLASGRTYHVTYNPPKVEGKDDVTGEDLIQRDDD) is LID. Residues Arg-123 and 132 to 133 (TY) contribute to the ATP site. AMP-binding residues include Arg-156 and Arg-167. Position 200 (Gln-200) interacts with ATP.

This sequence belongs to the adenylate kinase family. In terms of assembly, monomer.

Its subcellular location is the cytoplasm. It catalyses the reaction AMP + ATP = 2 ADP. It functions in the pathway purine metabolism; AMP biosynthesis via salvage pathway; AMP from ADP: step 1/1. In terms of biological role, catalyzes the reversible transfer of the terminal phosphate group between ATP and AMP. Plays an important role in cellular energy homeostasis and in adenine nucleotide metabolism. The protein is Adenylate kinase of Neisseria meningitidis serogroup C (strain 053442).